The chain runs to 254 residues: Type III pantothenate kinase (254 aa).

Residue 6–13 participates in ATP binding; that stretch reads DVGNTNTV. Substrate is bound by residues Y100 and 107 to 110; that span reads GADR. Catalysis depends on D109, which acts as the Proton acceptor. D129 lines the K(+) pocket. ATP is bound at residue T132. Substrate is bound at residue T184.

It belongs to the type III pantothenate kinase family. As to quaternary structure, homodimer. NH4(+) is required as a cofactor. Requires K(+) as cofactor.

The protein resides in the cytoplasm. It carries out the reaction (R)-pantothenate + ATP = (R)-4'-phosphopantothenate + ADP + H(+). Its pathway is cofactor biosynthesis; coenzyme A biosynthesis; CoA from (R)-pantothenate: step 1/5. In terms of biological role, catalyzes the phosphorylation of pantothenate (Pan), the first step in CoA biosynthesis. The polypeptide is Type III pantothenate kinase (Halalkalibacterium halodurans (strain ATCC BAA-125 / DSM 18197 / FERM 7344 / JCM 9153 / C-125) (Bacillus halodurans)).